Consider the following 491-residue polypeptide: Glycogen synthase (491 aa).

Residue Lys15 coordinates ADP-alpha-D-glucose.

Belongs to the glycosyltransferase 1 family. Bacterial/plant glycogen synthase subfamily.

The enzyme catalyses [(1-&gt;4)-alpha-D-glucosyl](n) + ADP-alpha-D-glucose = [(1-&gt;4)-alpha-D-glucosyl](n+1) + ADP + H(+). The protein operates within glycan biosynthesis; glycogen biosynthesis. Synthesizes alpha-1,4-glucan chains using ADP-glucose. This Hydrogenovibrio crunogenus (strain DSM 25203 / XCL-2) (Thiomicrospira crunogena) protein is Glycogen synthase.